We begin with the raw amino-acid sequence, 506 residues long: Ecdysteroid UDP-glucosyltransferase (506 aa).

The signal sequence occupies residues 1-18; it reads MTILCWLALLSTLTAVNA.

This sequence belongs to the UDP-glycosyltransferase family. Post-translationally, glycosylated.

Functionally, catalyzes the transfer of glucose from UDP-glucose to ecdysteroids which are insect molting hormones. Acts on the host at the organismal level to block its development, thereby increasing the yield of progeny virus. This chain is Ecdysteroid UDP-glucosyltransferase (EGT), found in Lepidoptera (butterflies and moths).